The primary structure comprises 147 residues: Peptidyl-lysine N-acetyltransferase YjaB (147 aa).

The 142-residue stretch at 3-144 folds into the N-acetyltransferase domain; the sequence is ISIRRSRHEE…KPYPLLNLAY (142 aa).

The protein belongs to the acetyltransferase family.

The enzyme catalyses L-lysyl-[protein] + acetyl-CoA = N(6)-acetyl-L-lysyl-[protein] + CoA + H(+). Functionally, N-epsilon-lysine acetyltransferase that catalyzes acetylation of a large number of proteins. Binds acetyl-CoA. The protein is Peptidyl-lysine N-acetyltransferase YjaB (yjaB) of Escherichia coli (strain K12).